Consider the following 282-residue polypeptide: Pantothenate synthetase (282 aa).

30–37 (MGNLHDGH) is a binding site for ATP. His37 acts as the Proton donor in catalysis. Gln61 lines the (R)-pantoate pocket. Beta-alanine is bound at residue Gln61. 149–152 (GEKD) contributes to the ATP binding site. Residue Gln155 coordinates (R)-pantoate. 186–189 (MSSR) is an ATP binding site.

It belongs to the pantothenate synthetase family. In terms of assembly, homodimer.

The protein localises to the cytoplasm. It carries out the reaction (R)-pantoate + beta-alanine + ATP = (R)-pantothenate + AMP + diphosphate + H(+). The protein operates within cofactor biosynthesis; (R)-pantothenate biosynthesis; (R)-pantothenate from (R)-pantoate and beta-alanine: step 1/1. Catalyzes the condensation of pantoate with beta-alanine in an ATP-dependent reaction via a pantoyl-adenylate intermediate. This chain is Pantothenate synthetase, found in Alteromonas mediterranea (strain DSM 17117 / CIP 110805 / LMG 28347 / Deep ecotype).